We begin with the raw amino-acid sequence, 79 residues long: UPF0180 protein BcerKBAB4_1316 (79 aa).

The protein belongs to the UPF0180 family.

The protein is UPF0180 protein BcerKBAB4_1316 of Bacillus mycoides (strain KBAB4) (Bacillus weihenstephanensis).